A 647-amino-acid polypeptide reads, in one-letter code: Protein INVOLVED IN DE NOVO 2 (647 aa).

2 disordered regions span residues 1–20 and 101–123; these read MGST…SESE and SASE…DCDH. Residues 9 to 20 show a composition bias toward acidic residues; sequence SDDEDSDISESE. A coiled-coil region spans residues 253-508; sequence IAELTEEEAR…NIMKEWNTNI (256 aa).

Interacts with FMD1/IDNL1. Forms a complex with FMD1/IDNL1 and FMD2/INDL2. Can form homodimers. Interacts with MORC6.

Forms a complex with FDM1/IDNL1 and FDM2/IDNL2 that is required for RNA-directed DNA methylation (RdDM) and that functions at a downstream step of the RdDM pathway and downstream of small interfering RNA (siRNA) formation. Required for de novo DNA methylation, siRNA accumulation and siRNA-mediated maintenance methylation. Required for several post-transcriptional gene silencing pathways. Binds double-stranded RNAs (dsRNAs) with 5'-overhangs through its XS domain. Binds long non-coding RNA (lncRNA) in an AGO4-dependent manner and associates with DRM2, resulting in DNA methylation of RdDM target loci. Mediates the silencing of a subset of MORC6 target loci. This chain is Protein INVOLVED IN DE NOVO 2, found in Arabidopsis thaliana (Mouse-ear cress).